The following is a 321-amino-acid chain: Phospho-N-acetylmuramoyl-pentapeptide-transferase (321 aa).

Transmembrane regions (helical) follow at residues M1–I21, M50–V70, I76–I96, F112–V132, I140–L160, G176–L196, A200–I220, V225–M245, L250–V270, and V300–V320.

This sequence belongs to the glycosyltransferase 4 family. MraY subfamily. Mg(2+) is required as a cofactor.

It is found in the cell membrane. It carries out the reaction UDP-N-acetyl-alpha-D-muramoyl-L-alanyl-gamma-D-glutamyl-L-lysyl-D-alanyl-D-alanine + di-trans,octa-cis-undecaprenyl phosphate = Mur2Ac(oyl-L-Ala-gamma-D-Glu-L-Lys-D-Ala-D-Ala)-di-trans,octa-cis-undecaprenyl diphosphate + UMP. It participates in cell wall biogenesis; peptidoglycan biosynthesis. Its function is as follows. Catalyzes the initial step of the lipid cycle reactions in the biosynthesis of the cell wall peptidoglycan: transfers peptidoglycan precursor phospho-MurNAc-pentapeptide from UDP-MurNAc-pentapeptide onto the lipid carrier undecaprenyl phosphate, yielding undecaprenyl-pyrophosphoryl-MurNAc-pentapeptide, known as lipid I. The sequence is that of Phospho-N-acetylmuramoyl-pentapeptide-transferase from Staphylococcus aureus (strain bovine RF122 / ET3-1).